Here is a 288-residue protein sequence, read N- to C-terminus: Diaminopimelate epimerase (288 aa).

Substrate is bound by residues Asn17, Gln47, and Asn67. The active-site Proton donor is Cys76. Residues 77–78 (GN), Asn163, Asn196, and 214–215 (ER) each bind substrate. Cys223 acts as the Proton acceptor in catalysis. Substrate is bound at residue 224 to 225 (GS).

It belongs to the diaminopimelate epimerase family. In terms of assembly, homodimer.

The protein localises to the cytoplasm. The catalysed reaction is (2S,6S)-2,6-diaminopimelate = meso-2,6-diaminopimelate. The protein operates within amino-acid biosynthesis; L-lysine biosynthesis via DAP pathway; DL-2,6-diaminopimelate from LL-2,6-diaminopimelate: step 1/1. Catalyzes the stereoinversion of LL-2,6-diaminopimelate (L,L-DAP) to meso-diaminopimelate (meso-DAP), a precursor of L-lysine and an essential component of the bacterial peptidoglycan. This Rhodopseudomonas palustris (strain BisB18) protein is Diaminopimelate epimerase.